We begin with the raw amino-acid sequence, 223 residues long: Deoxyribose-phosphate aldolase (223 aa).

Catalysis depends on Asp89, which acts as the Proton donor/acceptor. Lys152 (schiff-base intermediate with acetaldehyde) is an active-site residue. The active-site Proton donor/acceptor is Lys181.

This sequence belongs to the DeoC/FbaB aldolase family. DeoC type 1 subfamily.

Its subcellular location is the cytoplasm. The enzyme catalyses 2-deoxy-D-ribose 5-phosphate = D-glyceraldehyde 3-phosphate + acetaldehyde. The protein operates within carbohydrate degradation; 2-deoxy-D-ribose 1-phosphate degradation; D-glyceraldehyde 3-phosphate and acetaldehyde from 2-deoxy-alpha-D-ribose 1-phosphate: step 2/2. Functionally, catalyzes a reversible aldol reaction between acetaldehyde and D-glyceraldehyde 3-phosphate to generate 2-deoxy-D-ribose 5-phosphate. The chain is Deoxyribose-phosphate aldolase from Listeria monocytogenes serotype 4a (strain HCC23).